A 285-amino-acid polypeptide reads, in one-letter code: Aspartate/glutamate leucyltransferase (285 aa).

This sequence belongs to the R-transferase family. Bpt subfamily.

Its subcellular location is the cytoplasm. The catalysed reaction is N-terminal L-glutamyl-[protein] + L-leucyl-tRNA(Leu) = N-terminal L-leucyl-L-glutamyl-[protein] + tRNA(Leu) + H(+). The enzyme catalyses N-terminal L-aspartyl-[protein] + L-leucyl-tRNA(Leu) = N-terminal L-leucyl-L-aspartyl-[protein] + tRNA(Leu) + H(+). Its function is as follows. Functions in the N-end rule pathway of protein degradation where it conjugates Leu from its aminoacyl-tRNA to the N-termini of proteins containing an N-terminal aspartate or glutamate. The polypeptide is Aspartate/glutamate leucyltransferase (Dinoroseobacter shibae (strain DSM 16493 / NCIMB 14021 / DFL 12)).